The chain runs to 548 residues: Chaperonin GroEL (548 aa).

Residues 30–33 (TLGP), lysine 51, 87–91 (DGTTT), glycine 415, 479–481 (NAA), and aspartate 495 contribute to the ATP site.

This sequence belongs to the chaperonin (HSP60) family. Forms a cylinder of 14 subunits composed of two heptameric rings stacked back-to-back. Interacts with the co-chaperonin GroES.

The protein localises to the cytoplasm. It catalyses the reaction ATP + H2O + a folded polypeptide = ADP + phosphate + an unfolded polypeptide.. Together with its co-chaperonin GroES, plays an essential role in assisting protein folding. The GroEL-GroES system forms a nano-cage that allows encapsulation of the non-native substrate proteins and provides a physical environment optimized to promote and accelerate protein folding. This Sodalis glossinidius (strain morsitans) protein is Chaperonin GroEL.